The sequence spans 828 residues: Chitin synthase 7 (828 aa).

6 consecutive transmembrane segments (helical) span residues 17-37 (VIVG…VAAF), 57-77 (AVVV…IMVV), 95-115 (VGLQ…PWLF), 444-464 (FMQN…LAIL), 473-493 (LPVG…IYFG), and 501-521 (IWLY…YMVY). N-linked (GlcNAc...) asparagine glycosylation is present at Asn-615. 2 stretches are compositionally biased toward low complexity: residues 740-752 (SLVS…SNSN) and 813-822 (SNNDPNNSNS). 2 disordered regions span residues 740 to 780 (SLVS…LGRA) and 793 to 828 (LEIG…HQQR). An N-linked (GlcNAc...) asparagine glycan is attached at Asn-818.

This sequence belongs to the chitin synthase family. Class VII subfamily.

The protein localises to the membrane. It carries out the reaction [(1-&gt;4)-N-acetyl-beta-D-glucosaminyl](n) + UDP-N-acetyl-alpha-D-glucosamine = [(1-&gt;4)-N-acetyl-beta-D-glucosaminyl](n+1) + UDP + H(+). Functionally, polymerizes chitin, a structural polymer of the cell wall and septum, by transferring the sugar moiety of UDP-GlcNAc to the non-reducing end of the growing chitin polymer. Required for normal appressorial chitin content and for the normal formation and function of these infection structures. The polypeptide is Chitin synthase 7 (Pyricularia oryzae (strain 70-15 / ATCC MYA-4617 / FGSC 8958) (Rice blast fungus)).